Consider the following 456-residue polypeptide: L-2-hydroxyglutarate dehydrogenase, mitochondrial (456 aa).

The transit peptide at 1-20 (MLKTSFLLSKRNAVSLSRVL) directs the protein to the mitochondrion.

It belongs to the L2HGDH family. Requires FAD as cofactor.

It is found in the mitochondrion. It carries out the reaction (S)-2-hydroxyglutarate + A = 2-oxoglutarate + AH2. This is L-2-hydroxyglutarate dehydrogenase, mitochondrial from Nematostella vectensis (Starlet sea anemone).